The primary structure comprises 334 residues: Cytoskeleton protein RodZ (334 aa).

Residues Met1–Gly111 are Cytoplasmic-facing. One can recognise an HTH cro/C1-type domain in the interval Leu19–Leu71. The H-T-H motif DNA-binding region spans Gln30–Glu49. The helical; Signal-anchor for type II membrane protein transmembrane segment at Trp112–Trp132 threads the bilayer. Residues Trp133–Gln334 lie on the Periplasmic side of the membrane. Residues Leu154–Gly241 are disordered. Composition is skewed to low complexity over residues Thr176 to Ala211 and Thr219 to Gly241.

The protein belongs to the RodZ family.

It is found in the cell inner membrane. Cytoskeletal protein that is involved in cell-shape control through regulation of the length of the long axis. This Salmonella choleraesuis (strain SC-B67) protein is Cytoskeleton protein RodZ.